Reading from the N-terminus, the 202-residue chain is Small ribosomal subunit protein uS4 (202 aa).

Positions 22 to 43 are disordered; the sequence is TRKSARRAYPPGQHGQNRKKRS. Residues 90–152 form the S4 RNA-binding domain; sequence MRLDNTVFRL…APSRKLVENN (63 aa).

Belongs to the universal ribosomal protein uS4 family. Part of the 30S ribosomal subunit. Contacts protein S5. The interaction surface between S4 and S5 is involved in control of translational fidelity.

Its function is as follows. One of the primary rRNA binding proteins, it binds directly to 16S rRNA where it nucleates assembly of the body of the 30S subunit. Functionally, with S5 and S12 plays an important role in translational accuracy. In Nostoc sp. (strain PCC 7120 / SAG 25.82 / UTEX 2576), this protein is Small ribosomal subunit protein uS4.